Here is a 94-residue protein sequence, read N- to C-terminus: Alpha-elapitoxin-Nss2a (94 aa).

An N-terminal signal peptide occupies residues 1-21 (MKTLLLTLVVVTIVCLDLGDS). Disulfide bonds link Cys24–Cys41, Cys34–Cys62, Cys47–Cys51, Cys66–Cys77, and Cys78–Cys83.

The protein belongs to the three-finger toxin family. Long-chain subfamily. Type II alpha-neurotoxin sub-subfamily. As to expression, expressed by the venom gland.

Its subcellular location is the secreted. Binds with high affinity to muscular (alpha-1/CHRNA1) and neuronal (alpha-7/CHRNA7) nicotinic acetylcholine receptor (nAChR) and inhibits acetylcholine from binding to the receptor, thereby impairing neuromuscular and neuronal transmission. The chain is Alpha-elapitoxin-Nss2a from Notechis scutatus scutatus (Mainland tiger snake).